The sequence spans 286 residues: Probable endonuclease 4 (286 aa).

Zn(2+)-binding residues include His-67, His-107, Glu-144, Asp-178, His-181, His-215, Asp-228, His-230, and Glu-260.

The protein belongs to the AP endonuclease 2 family. The cofactor is Zn(2+).

It carries out the reaction Endonucleolytic cleavage to 5'-phosphooligonucleotide end-products.. Functionally, endonuclease IV plays a role in DNA repair. It cleaves phosphodiester bonds at apurinic or apyrimidinic (AP) sites, generating a 3'-hydroxyl group and a 5'-terminal sugar phosphate. In Chloroflexus aggregans (strain MD-66 / DSM 9485), this protein is Probable endonuclease 4.